The sequence spans 853 residues: DNA mismatch repair protein MutS (853 aa).

614–621 (GPNMGGKS) is an ATP binding site.

It belongs to the DNA mismatch repair MutS family.

Functionally, this protein is involved in the repair of mismatches in DNA. It is possible that it carries out the mismatch recognition step. This protein has a weak ATPase activity. The protein is DNA mismatch repair protein MutS of Escherichia coli O7:K1 (strain IAI39 / ExPEC).